The following is a 314-amino-acid chain: Homoserine kinase (314 aa).

97–107 (PPARGMGSSAT) contributes to the ATP binding site.

Belongs to the GHMP kinase family. Homoserine kinase subfamily.

Its subcellular location is the cytoplasm. It catalyses the reaction L-homoserine + ATP = O-phospho-L-homoserine + ADP + H(+). It participates in amino-acid biosynthesis; L-threonine biosynthesis; L-threonine from L-aspartate: step 4/5. Its function is as follows. Catalyzes the ATP-dependent phosphorylation of L-homoserine to L-homoserine phosphate. The chain is Homoserine kinase from Synechococcus sp. (strain RCC307).